Reading from the N-terminus, the 566-residue chain is Medium-chain fatty-acid--CoA ligase (566 aa).

Residue 231 to 242 participates in ATP binding; it reads ILASERAYCARL.

The protein belongs to the ATP-dependent AMP-binding enzyme family. In terms of assembly, homodimer. Mg(2+) serves as cofactor.

The protein localises to the cell membrane. The catalysed reaction is hexanoate + ATP + CoA = hexanoyl-CoA + AMP + diphosphate. The enzyme catalyses octanoate + ATP + CoA = octanoyl-CoA + AMP + diphosphate. It carries out the reaction dodecanoate + ATP + CoA = dodecanoyl-CoA + AMP + diphosphate. Its pathway is lipid metabolism; fatty acid beta-oxidation. In terms of biological role, catalyzes the esterification, concomitant with transport, of exogenous fatty acids into metabolically active CoA thioesters for subsequent degradation or incorporation into phospholipids. Is maximally active on C6:0, C8:0 and C12:0 fatty acids, while has a low activity on C14-C18 chain length fatty acids. Is involved in the anaerobic beta-oxidative degradation of fatty acids, which allows anaerobic growth of E.coli on fatty acids as a sole carbon and energy source in the presence of nitrate or fumarate as a terminal electron acceptor. Can functionally replace FadD under anaerobic conditions. This chain is Medium-chain fatty-acid--CoA ligase, found in Escherichia coli (strain K12).